The chain runs to 444 residues: UDP-N-acetylmuramate--L-alanine ligase (444 aa).

An ATP-binding site is contributed by 110–116 (GAHGKTS).

The protein belongs to the MurCDEF family.

Its subcellular location is the cytoplasm. It carries out the reaction UDP-N-acetyl-alpha-D-muramate + L-alanine + ATP = UDP-N-acetyl-alpha-D-muramoyl-L-alanine + ADP + phosphate + H(+). It participates in cell wall biogenesis; peptidoglycan biosynthesis. Cell wall formation. This is UDP-N-acetylmuramate--L-alanine ligase from Streptococcus pneumoniae (strain CGSP14).